Consider the following 177-residue polypeptide: Cell division protein ZapC (177 aa).

The protein belongs to the ZapC family. As to quaternary structure, interacts directly with FtsZ.

The protein resides in the cytoplasm. In terms of biological role, contributes to the efficiency of the cell division process by stabilizing the polymeric form of the cell division protein FtsZ. Acts by promoting interactions between FtsZ protofilaments and suppressing the GTPase activity of FtsZ. The sequence is that of Cell division protein ZapC from Shewanella frigidimarina (strain NCIMB 400).